The primary structure comprises 116 residues: Peptidyl-tRNA hydrolase (116 aa).

It belongs to the PTH2 family.

It localises to the cytoplasm. The catalysed reaction is an N-acyl-L-alpha-aminoacyl-tRNA + H2O = an N-acyl-L-amino acid + a tRNA + H(+). The natural substrate for this enzyme may be peptidyl-tRNAs which drop off the ribosome during protein synthesis. The polypeptide is Peptidyl-tRNA hydrolase (Methanococcus maripaludis (strain C6 / ATCC BAA-1332)).